Reading from the N-terminus, the 260-residue chain is MSHHWGYGKHNGPEHWHKDFPIANGERQSPVDIDTKAVVQDPALKPLALVYGEATSRRMVNNGHSFNVEYDDSQDKAVLKDGPLTGTYRLVQFHFHWGSSDDQGSEHTVDRKKYAAELHLVHWNTKYGDFGTAAQQPDGLAVVGVFLKVGDANPALQKVLDALDSIKTKGKSTDFPNFDPGSLLPNVLDYWTYPGSLTTPPLLESVTWIVLKEPISVSSQQMLKFRTLNFNAEGEPELLMLANWRPAQPLKNRQVRGFPK.

An N-acetylserine modification is found at S2. Position 2 is a phosphoserine (S2). Residues 3 to 259 enclose the Alpha-carbonic anhydrase domain; the sequence is HHWGYGKHNG…LKNRQVRGFP (257 aa). The active-site Proton donor/acceptor is H64. The Zn(2+) site is built by H94, H96, and H119. S165 and S172 each carry phosphoserine. 198-199 provides a ligand contact to substrate; the sequence is TT.

Belongs to the alpha-carbonic anhydrase family. Interacts with SLC4A4. Interaction with SLC4A7 regulates SLC4A7 transporter activity. It depends on Zn(2+) as a cofactor.

It localises to the cytoplasm. The protein localises to the cell membrane. It carries out the reaction hydrogencarbonate + H(+) = CO2 + H2O. It catalyses the reaction urea = cyanamide + H2O. With respect to regulation, inhibited by acetazolamide. Its function is as follows. Catalyzes the reversible hydration of carbon dioxide. Can also hydrate cyanamide to urea. Involved in the regulation of fluid secretion into the anterior chamber of the eye. Essential for bone resorption and osteoclast differentiation. Contributes to intracellular pH regulation in the duodenal upper villous epithelium during proton-coupled peptide absorption. Stimulates the chloride-bicarbonate exchange activity of SLC26A6. This chain is Carbonic anhydrase 2 (CA2), found in Bos taurus (Bovine).